A 166-amino-acid polypeptide reads, in one-letter code: MLVIHRRIAPQALWAAELLLNFEARSKSRLRCFSADGEDVGLFLERGQPPLHDGEFLQAEDGRVVRVCARPEQLLHVTCSNAFELTRAAYHLGNRHVALQVGDGWLRLLDDYVLKAMLEQLGAQTETIEAPFQPEHGAYGGGHHHSRHGDEDFNYPPKLHQFGVRL.

The interval 133–154 is disordered; that stretch reads QPEHGAYGGGHHHSRHGDEDFN.

Belongs to the UreE family.

The protein localises to the cytoplasm. Functionally, involved in urease metallocenter assembly. Binds nickel. Probably functions as a nickel donor during metallocenter assembly. This is Urease accessory protein UreE from Pseudomonas fluorescens (strain SBW25).